Reading from the N-terminus, the 472-residue chain is 3-isopropylmalate dehydratase large subunit (472 aa).

[4Fe-4S] cluster is bound by residues Cys-353, Cys-414, and Cys-417.

Belongs to the aconitase/IPM isomerase family. LeuC type 1 subfamily. In terms of assembly, heterodimer of LeuC and LeuD. [4Fe-4S] cluster serves as cofactor.

The enzyme catalyses (2R,3S)-3-isopropylmalate = (2S)-2-isopropylmalate. Its pathway is amino-acid biosynthesis; L-leucine biosynthesis; L-leucine from 3-methyl-2-oxobutanoate: step 2/4. Functionally, catalyzes the isomerization between 2-isopropylmalate and 3-isopropylmalate, via the formation of 2-isopropylmaleate. This chain is 3-isopropylmalate dehydratase large subunit, found in Acinetobacter baumannii (strain AB307-0294).